The following is a 405-amino-acid chain: Riboflavin biosynthesis protein RibBA (405 aa).

The DHBP synthase stretch occupies residues Met-1–Thr-205. Residues Arg-30–Glu-31, Asp-35, Arg-144–Thr-148, and Glu-168 each bind D-ribulose 5-phosphate. Glu-31 is a binding site for Mg(2+). His-147 is a Mg(2+) binding site. The interval His-206–Asp-405 is GTP cyclohydrolase II. Residue Arg-256–Ser-260 participates in GTP binding. Zn(2+) is bound by residues Cys-261, Cys-272, and Cys-274. Residues Gln-277, Glu-299–Arg-301, and Thr-321 contribute to the GTP site. The Proton acceptor; for GTP cyclohydrolase activity role is filled by Asp-333. Arg-335 functions as the Nucleophile; for GTP cyclohydrolase activity in the catalytic mechanism. Residues Thr-356 and Lys-361 each contribute to the GTP site.

The protein in the N-terminal section; belongs to the DHBP synthase family. In the C-terminal section; belongs to the GTP cyclohydrolase II family. The cofactor is Mg(2+). Mn(2+) serves as cofactor. Requires Zn(2+) as cofactor.

The catalysed reaction is D-ribulose 5-phosphate = (2S)-2-hydroxy-3-oxobutyl phosphate + formate + H(+). It catalyses the reaction GTP + 4 H2O = 2,5-diamino-6-hydroxy-4-(5-phosphoribosylamino)-pyrimidine + formate + 2 phosphate + 3 H(+). It functions in the pathway cofactor biosynthesis; riboflavin biosynthesis; 2-hydroxy-3-oxobutyl phosphate from D-ribulose 5-phosphate: step 1/1. Its pathway is cofactor biosynthesis; riboflavin biosynthesis; 5-amino-6-(D-ribitylamino)uracil from GTP: step 1/4. Its function is as follows. Catalyzes the conversion of D-ribulose 5-phosphate to formate and 3,4-dihydroxy-2-butanone 4-phosphate. In terms of biological role, catalyzes the conversion of GTP to 2,5-diamino-6-ribosylamino-4(3H)-pyrimidinone 5'-phosphate (DARP), formate and pyrophosphate. The chain is Riboflavin biosynthesis protein RibBA from Cytophaga hutchinsonii (strain ATCC 33406 / DSM 1761 / CIP 103989 / NBRC 15051 / NCIMB 9469 / D465).